Here is a 462-residue protein sequence, read N- to C-terminus: Integrator complex subunit 12 (462 aa).

The disordered stretch occupies residues 42–132; it reads GIDSSYRPSQ…PETQSSPITV (91 aa). A compositionally biased stretch (polar residues) spans 59 to 86; that stretch reads ISSTKNISIKQEPKISSSLPSGNNNGKV. A Glycyl lysine isopeptide (Lys-Gly) (interchain with G-Cter in SUMO2) cross-link involves residue lysine 68. The span at 88 to 124 shows a compositional bias: basic and acidic residues; the sequence is TTEKVKKEAEKRPADKMKSDITEGVDIPKKPRLEKPE. A Phosphoserine modification is found at serine 128. The PHD-type zinc-finger motif lies at 159–215; that stretch reads GLACVVCRQMMVASGNQLVECQECHNLYHRDCHKPQVTDKEANDPRLVWYCARCTRQ. Residue lysine 254 forms a Glycyl lysine isopeptide (Lys-Gly) (interchain with G-Cter in SUMO2) linkage. A compositionally biased stretch (polar residues) spans 301–328; it reads SSAGPSTAKLSSTTQNNTGKPATSSANQ. The interval 301-462 is disordered; sequence SSAGPSTAKL…KKAAQKKLKK (162 aa). Composition is skewed to low complexity over residues 347 to 358 and 382 to 437; these read KIGSNNSTTPTV and VSKV…GPTS. Residues 449 to 462 are compositionally biased toward basic residues; that stretch reads QMVKKKAAQKKLKK.

Belongs to the Integrator subunit 12 family. As to quaternary structure, component of the Integrator complex, composed of core subunits INTS1, INTS2, INTS3, INTS4, INTS5, INTS6, INTS7, INTS8, INTS9/RC74, INTS10, INTS11/CPSF3L, INTS12, INTS13, INTS14 and INTS15. The core complex associates with protein phosphatase 2A subunits PPP2CA and PPP2R1A, to form the Integrator-PP2A (INTAC) complex. Post-translationally, dephosphorylated at Ser-128 by the PNUTS-PP1 complex, promoting RNA polymerase II transcription pause-release.

It localises to the nucleus. In terms of biological role, component of the integrator complex, a multiprotein complex that terminates RNA polymerase II (Pol II) transcription in the promoter-proximal region of genes. The integrator complex provides a quality checkpoint during transcription elongation by driving premature transcription termination of transcripts that are unfavorably configured for transcriptional elongation: the complex terminates transcription by (1) catalyzing dephosphorylation of the C-terminal domain (CTD) of Pol II subunit POLR2A/RPB1 and SUPT5H/SPT5, (2) degrading the exiting nascent RNA transcript via endonuclease activity and (3) promoting the release of Pol II from bound DNA. The integrator complex is also involved in terminating the synthesis of non-coding Pol II transcripts, such as enhancer RNAs (eRNAs), small nuclear RNAs (snRNAs), telomerase RNAs and long non-coding RNAs (lncRNAs). Mediates recruitment of cytoplasmic dynein to the nuclear envelope, probably as component of the integrator complex. In Pongo abelii (Sumatran orangutan), this protein is Integrator complex subunit 12 (INTS12).